The sequence spans 292 residues: uncharacterized protein (292 aa).

This is an uncharacterized protein from Aquifex aeolicus (strain VF5).